A 169-amino-acid chain; its full sequence is Probable phospholipid hydroperoxide glutathione peroxidase (169 aa).

Residue Cys-43 is part of the active site.

It belongs to the glutathione peroxidase family. In terms of assembly, monomer. Has a tendency to form higher mass oligomers. Interacts with FUNDC1; this interaction promotes GPX4 recruitment into mitochondria through TOM/TIM complex where it is degraded by mitophagy.

The protein resides in the cytoplasm. It catalyses the reaction a hydroperoxy polyunsaturated fatty acid + 2 glutathione = a hydroxy polyunsaturated fatty acid + glutathione disulfide + H2O. Its function is as follows. Protects cells and enzymes from oxidative damage, by catalyzing the reduction of hydrogen peroxide, lipid peroxides and organic hydroperoxide, by glutathione. This Solanum lycopersicum (Tomato) protein is Probable phospholipid hydroperoxide glutathione peroxidase (GPXle-1).